We begin with the raw amino-acid sequence, 357 residues long: Glucose 1-dehydrogenase (357 aa).

Aspartate 38 is a Zn(2+) binding site. Substrate contacts are provided by threonine 40 and histidine 49. Positions 63 and 64 each coordinate Zn(2+). 2 residues coordinate substrate: glutamate 114 and glutamate 150. Zn(2+) is bound at residue glutamate 150. Residues 181-184 (NGSL), 207-208 (RR), serine 228, 272-274 (LGV), and 301-303 (SVN) contribute to the NADP(+) site. Asparagine 303 lines the substrate pocket.

Belongs to the zinc-containing alcohol dehydrogenase family. Glucose 1-dehydrogenase subfamily. As to quaternary structure, homodimer. Requires Zn(2+) as cofactor.

The enzyme catalyses D-glucose + NAD(+) = D-glucono-1,5-lactone + NADH + H(+). It carries out the reaction D-glucose + NADP(+) = D-glucono-1,5-lactone + NADPH + H(+). Its activity is regulated as follows. Activated by molar concentrations of KCl or NaCl. Inhibited by EDTA in vitro. Catalyzes the NAD(P)(+)-dependent oxidation of D-glucose to D-gluconate. Displays broad substrate specificity since it is able to catalyze the oxidation of a number of alternative aldose sugars, such as D-xylose, D-galactose, and D-fucose, to the corresponding glyconate. Can utilize both NAD(+) and NADP(+) as electron acceptor, with a preference for NADP(+). Physiologically, seems to be involved in the degradation of glucose through a modified Entner-Doudoroff pathway. The chain is Glucose 1-dehydrogenase from Haloferax mediterranei (strain ATCC 33500 / DSM 1411 / JCM 8866 / NBRC 14739 / NCIMB 2177 / R-4) (Halobacterium mediterranei).